The sequence spans 202 residues: Small ribosomal subunit protein uS4 (202 aa).

The disordered stretch occupies residues 22–48 (TGKELARRPYAPGDHGQGRRGKLSEYG). An S4 RNA-binding domain is found at 93–154 (RRLDNMVYRL…KSKKLAVITG (62 aa)).

Belongs to the universal ribosomal protein uS4 family. Part of the 30S ribosomal subunit. Contacts protein S5. The interaction surface between S4 and S5 is involved in control of translational fidelity.

One of the primary rRNA binding proteins, it binds directly to 16S rRNA where it nucleates assembly of the body of the 30S subunit. Functionally, with S5 and S12 plays an important role in translational accuracy. The protein is Small ribosomal subunit protein uS4 of Lactiplantibacillus plantarum (strain ATCC BAA-793 / NCIMB 8826 / WCFS1) (Lactobacillus plantarum).